We begin with the raw amino-acid sequence, 446 residues long: Deoxyguanosinetriphosphate triphosphohydrolase-like protein (446 aa).

The disordered stretch occupies residues 1-28 (MSSSVWQERRHGEDKQRRNDHRSPFQRD). Residues 7 to 28 (QERRHGEDKQRRNDHRSPFQRD) show a composition bias toward basic and acidic residues. The HD domain maps to 59 to 252 (RLTHSLEVSQ…MELADDIAYA (194 aa)).

The protein belongs to the dGTPase family. Type 2 subfamily.

The chain is Deoxyguanosinetriphosphate triphosphohydrolase-like protein from Shewanella sp. (strain ANA-3).